A 567-amino-acid polypeptide reads, in one-letter code: Phosphoglucomutase-like protein 5 (567 aa).

Residues 1–26 (MEGSPIPVLTVPTAPYEDQRPAGGGG) form a disordered region. Threonine 120 carries the post-translational modification Phosphothreonine. Serine 122 carries the post-translational modification Phosphoserine.

It belongs to the phosphohexose mutase family. In terms of assembly, interacts with DMD/dystrophin; the interaction is direct. Interacts with UTRN/utrophin. As to expression, detected in smooth and cardiac muscle at high levels and in skeletal muscle at low level. Present in other tissues due to vascular or other smooth muscle component. Low levels are present in liver, kidney, skin and brain (at protein level).

It is found in the cell junction. The protein resides in the adherens junction. It localises to the cytoplasm. The protein localises to the cytoskeleton. Its subcellular location is the cell membrane. It is found in the sarcolemma. Functionally, component of adherens-type cell-cell and cell-matrix junctions. Has no phosphoglucomutase activity in vitro. The polypeptide is Phosphoglucomutase-like protein 5 (Homo sapiens (Human)).